A 561-amino-acid polypeptide reads, in one-letter code: MKETVSELLQSALATLQSDGTLPADQSFTPQVGNTKDKSHGDYACNIALVASKAAGCPPRKLAEALVAALPENSAVEKVEIAGPGFINFFMSTASAFGIVNTILDEAQQFGRNNSGNGERVQVEFVSANPTGPLHVGHGRGAAIGDCLCRLLEANGYDVTREFYYNDAGAQINNLALSVQSRVKGLTPEDESWPEDGYRGDYIVDVANAYLAGETVVADDREVTAKADPEDRDAIREFAVAYLRREQDLDLKAFGVQFDVYFLESSLYEDGKVEATVERLKANGYTYEQDGAMWLKTTEFGDDKDRVMRKKDGGYTYFLPDVAYHLDKWQRGFTTVINEQGADHHSTVTRVRAGLQALKADIPQGWPDYVLHQMVMVTRSGQEVKISKRAGSYVTVRDLIDEVGRDATRFFLAARRVDSQLTFDIDLARSQTNENPVYYIQYAHARICSVLRKLAAEGVQRGMNECVGELSLLTLDEEKELANQLAKYPELIANSAAQREPHHLTHYLRELAGQFHTYYNAHKVLIEDTALRDARVSLYLAVRQVIANGLDLLGVSAPEEM.

Residues 128 to 138 carry the 'HIGH' region motif; that stretch reads ANPTGPLHVGH.

This sequence belongs to the class-I aminoacyl-tRNA synthetase family. As to quaternary structure, monomer.

It localises to the cytoplasm. It carries out the reaction tRNA(Arg) + L-arginine + ATP = L-arginyl-tRNA(Arg) + AMP + diphosphate. In Marinobacter nauticus (strain ATCC 700491 / DSM 11845 / VT8) (Marinobacter aquaeolei), this protein is Arginine--tRNA ligase.